A 215-amino-acid chain; its full sequence is Cytochrome b6 (215 aa).

Residues 32–52 (IFYCLGGITLTCFLVQVATGF) form a helical membrane-spanning segment. Cysteine 35 serves as a coordination point for heme c. Heme b-binding residues include histidine 86 and histidine 100. 3 helical membrane-spanning segments follow: residues 90–110 (ASMMVLMMILHVFRVYLTGGF), 116–136 (LTWVTGVVLGVLTASFGVTGY), and 186–206 (LHTFVLPLLTAVFMLMHFSMI). Histidine 187 and histidine 202 together coordinate heme b.

The protein belongs to the cytochrome b family. PetB subfamily. As to quaternary structure, the 4 large subunits of the cytochrome b6-f complex are cytochrome b6, subunit IV (17 kDa polypeptide, PetD), cytochrome f and the Rieske protein, while the 4 small subunits are PetG, PetL, PetM and PetN. The complex functions as a dimer. Heme b serves as cofactor. Heme c is required as a cofactor.

The protein resides in the plastid. Its subcellular location is the chloroplast thylakoid membrane. Component of the cytochrome b6-f complex, which mediates electron transfer between photosystem II (PSII) and photosystem I (PSI), cyclic electron flow around PSI, and state transitions. In Lotus japonicus (Lotus corniculatus var. japonicus), this protein is Cytochrome b6.